Here is a 161-residue protein sequence, read N- to C-terminus: Allophycocyanin beta chain (161 aa).

N71 is modified (N4-methylasparagine). A (2R,3E)-phycocyanobilin-binding site is contributed by C81.

It belongs to the phycobiliprotein family. Heterodimer of an alpha and a beta chain. Post-translationally, contains one covalently linked phycocyanobilin chromophore.

It is found in the cellular thylakoid membrane. In terms of biological role, light-harvesting photosynthetic bile pigment-protein from the phycobiliprotein complex. Allophycocyanin has a maximum absorption at approximately 650 nanometers. This chain is Allophycocyanin beta chain (apcB), found in Synechocystis sp. (strain PCC 6714) (Aphanocapsa sp. (strain PCC 6714)).